A 273-amino-acid polypeptide reads, in one-letter code: Ribosomal RNA small subunit methyltransferase A (273 aa).

S-adenosyl-L-methionine-binding residues include Asn-18, Leu-20, Gly-45, Glu-66, Asp-91, and Asn-113.

Belongs to the class I-like SAM-binding methyltransferase superfamily. rRNA adenine N(6)-methyltransferase family. RsmA subfamily.

The protein localises to the cytoplasm. It catalyses the reaction adenosine(1518)/adenosine(1519) in 16S rRNA + 4 S-adenosyl-L-methionine = N(6)-dimethyladenosine(1518)/N(6)-dimethyladenosine(1519) in 16S rRNA + 4 S-adenosyl-L-homocysteine + 4 H(+). Its function is as follows. Specifically dimethylates two adjacent adenosines (A1518 and A1519) in the loop of a conserved hairpin near the 3'-end of 16S rRNA in the 30S particle. May play a critical role in biogenesis of 30S subunits. This is Ribosomal RNA small subunit methyltransferase A from Escherichia coli O157:H7.